The chain runs to 118 residues: Large ribosomal subunit protein bL20 (118 aa).

This sequence belongs to the bacterial ribosomal protein bL20 family.

Functionally, binds directly to 23S ribosomal RNA and is necessary for the in vitro assembly process of the 50S ribosomal subunit. It is not involved in the protein synthesizing functions of that subunit. This is Large ribosomal subunit protein bL20 from Lacticaseibacillus casei (strain BL23) (Lactobacillus casei).